The chain runs to 419 residues: Histidine--tRNA ligase (419 aa).

This sequence belongs to the class-II aminoacyl-tRNA synthetase family. In terms of assembly, homodimer.

Its subcellular location is the cytoplasm. The catalysed reaction is tRNA(His) + L-histidine + ATP = L-histidyl-tRNA(His) + AMP + diphosphate + H(+). The chain is Histidine--tRNA ligase from Mycoplasmoides gallisepticum (strain R(low / passage 15 / clone 2)) (Mycoplasma gallisepticum).